A 423-amino-acid chain; its full sequence is Putative serpin-Z12 (423 aa).

Residues 1–25 (MAALAAGEPFSGRATGGDGGVRSDV) are disordered. The segment at 370 to 394 (GTVAAASTAVVMMQKGSSLPPVDFV) is RCL.

This sequence belongs to the serpin family.

Its function is as follows. Probable serine protease inhibitor. This is Putative serpin-Z12 from Oryza sativa subsp. japonica (Rice).